Reading from the N-terminus, the 213-residue chain is Phosphate-specific transport system accessory protein PhoU homolog 2 (213 aa).

The protein belongs to the PhoU family. Homodimer.

Its subcellular location is the cytoplasm. Plays a role in the regulation of phosphate uptake. In this role, it may bind, possibly as a chaperone, to PhoR, PhoP or a PhoR-PhoP complex to promote dephosphorylation of phospho-PhoP, or inhibit formation of the PhoR-PhoP transitory complex. This Mycobacterium bovis (strain ATCC BAA-935 / AF2122/97) protein is Phosphate-specific transport system accessory protein PhoU homolog 2 (phoU2).